The sequence spans 845 residues: Envelope glycoprotein B (845 aa).

The N-terminal stretch at Met1–Ser26 is a signal peptide. The Virion surface segment spans residues Arg27–Pro732. A disordered region spans residues Asp29 to Pro57. The segment covering Thr33–Lys49 has biased composition (low complexity). 5 disulfide bridges follow: Cys68-Cys528, Cys85-Cys484, Cys157-Cys222, Cys315-Cys362, and Cys550-Cys587. The involved in fusion and/or binding to host membrane stretch occupies residues Val124–Glu130. N-linked (GlcNAc...) asparagine; by host glycosylation is present at Asn179. The involved in fusion and/or binding to host membrane stretch occupies residues Gly208–Val216. Asn254, Asn275, Asn355, Asn368, Asn372, Asn385, and Asn408 each carry an N-linked (GlcNAc...) asparagine; by host glycan. Residues His411 to Gly451 form a disordered region. Asn455, Asn562, Asn599, Asn614, and Asn628 each carry an N-linked (GlcNAc...) asparagine; by host glycan. The interval Leu678–Lys730 is hydrophobic membrane proximal region. The chain crosses the membrane as a helical span at residues Leu733–Ser753. Over Arg754–Glu845 the chain is Intravirion. Positions Arg802–Glu845 are disordered. A compositionally biased stretch (polar residues) spans Ser811–Gly822. The Internalization motif motif lies at Tyr830–Leu833.

This sequence belongs to the herpesviridae glycoprotein B family. Homotrimer; disulfide-linked. Binds to heparan sulfate proteoglycans. Interacts with gH/gL heterodimer. Interacts with host ITGAV-ITGB3; this interaction mediates viral entry. A proteolytic cleavage by host furin generates two subunits that remain linked by disulfide bonds.

The protein resides in the virion membrane. It is found in the host cell membrane. Its subcellular location is the host endosome membrane. It localises to the host Golgi apparatus membrane. Functionally, envelope glycoprotein that forms spikes at the surface of the virion envelope. Participates in viral entry through an RGD motif that binds ITGAV-ITGB3. Membrane fusion is mediated by the fusion machinery composed at least of gB and the heterodimer gH/gL. May be involved in the fusion between the virion envelope and the outer nuclear membrane during virion egress. This chain is Envelope glycoprotein B, found in Homo sapiens (Human).